A 176-amino-acid chain; its full sequence is Probable inosine/xanthosine triphosphatase (176 aa).

Position 36 (Asp-36) interacts with Mg(2+).

Belongs to the YjjX NTPase family. In terms of assembly, homodimer. Mg(2+) is required as a cofactor. Mn(2+) serves as cofactor.

It carries out the reaction XTP + H2O = XDP + phosphate + H(+). It catalyses the reaction ITP + H2O = IDP + phosphate + H(+). Functionally, phosphatase that hydrolyzes non-canonical purine nucleotides such as XTP and ITP to their respective diphosphate derivatives. Probably excludes non-canonical purines from DNA/RNA precursor pool, thus preventing their incorporation into DNA/RNA and avoiding chromosomal lesions. In Saccharolobus islandicus (strain M.16.4 / Kamchatka #3) (Sulfolobus islandicus), this protein is Probable inosine/xanthosine triphosphatase.